We begin with the raw amino-acid sequence, 354 residues long: Decorin (354 aa).

Residues 1-16 (MKATLVLFLLAQVSWA) form the signal peptide. The propeptide occupies 17–30 (GPFEQRGLFDFMLE). Ser34 carries an O-linked (Xyl...) (glycosaminoglycan) serine glycan. Intrachain disulfides connect Cys49–Cys55 and Cys53–Cys62. LRR repeat units lie at residues 68–88 (DKVPWEFPPDTTLLDLQNNKI), 89–112 (TEIKEGAFKNLKDLHTLILVNNKI), 113–136 (SKISPEAFKPLVKLERLYLSKNHL), 137–157 (KELPEKLPKTLQELRLHDNEI), 158–181 (TKLKKSVFNGLNRMIVIELGGNPL), 182–207 (KNSGIENGALQGMKGLGYIRISDTNI), 208–228 (TAIPQGLPTSISELHLDGNKI), 229–252 (AKVDAASLKGMSNLSKLGLSFNSI), 253–276 (TVVENGSLANVPHLRELHLDNNKL), 277–299 (LRVPAGLAQHKYVQVVYLHNNNI), 300–329 (SEVGQHDFCLPSYQTRKTSYTAVSLYSNPV), and 330–354 (RYWQIHPHTFRCVFGRSTIQLGNYK). The N-linked (GlcNAc...) asparagine glycan is linked to Asn206. N-linked (GlcNAc...) asparagine glycosylation is found at Asn241, Asn257, and Asn298. The cysteines at positions 308 and 341 are disulfide-linked.

Belongs to the small leucine-rich proteoglycan (SLRP) family. SLRP class I subfamily. As to quaternary structure, binds to type I and type II collagen, fibronectin and TGF-beta. Forms a ternary complex with MFAP2 and ELN. Interacts with DPT. Post-translationally, the attached glycosaminoglycan chain can be either chondroitin sulfate or dermatan sulfate depending upon the tissue of origin.

The protein localises to the secreted. Its subcellular location is the extracellular space. The protein resides in the extracellular matrix. May affect the rate of fibrils formation. May be implicated in the dilatation of the rat cervix. The polypeptide is Decorin (Dcn) (Rattus norvegicus (Rat)).